We begin with the raw amino-acid sequence, 276 residues long: ARL14 effector protein (276 aa).

Residues 158–177 are disordered; that stretch reads KQTEFAPEGGKREKRKLTKA. Lysine 176 is covalently cross-linked (Glycyl lysine isopeptide (Lys-Gly) (interchain with G-Cter in SUMO2)). Phosphoserine is present on residues serine 182 and serine 266.

As to quaternary structure, interacts with ARL14 and MYO1E.

The protein resides in the cytoplasm. Its function is as follows. Through its interaction with ARL14 and MYO1E, may connect MHC class II-containing cytoplasmic vesicles to the actin network and hence controls the movement of these vesicles along the actin cytoskeleton in dendritic cells. The sequence is that of ARL14 effector protein (Arl14ep) from Mus musculus (Mouse).